The chain runs to 397 residues: Elongation factor Tu (397 aa).

Positions 10–206 (KPHVNVGTIG…TMDTYFPQPE (197 aa)) constitute a tr-type G domain. A G1 region spans residues 19–26 (GHVDHGKT). Residue 19 to 26 (GHVDHGKT) participates in GTP binding. Thr26 serves as a coordination point for Mg(2+). Positions 60 to 64 (GITIA) are G2. Positions 81-84 (DCPG) are G3. GTP contacts are provided by residues 81–85 (DCPGH) and 136–139 (NKAD). The interval 136 to 139 (NKAD) is G4. A G5 region spans residues 174 to 176 (SAL).

It belongs to the TRAFAC class translation factor GTPase superfamily. Classic translation factor GTPase family. EF-Tu/EF-1A subfamily. Monomer.

The protein localises to the cytoplasm. It catalyses the reaction GTP + H2O = GDP + phosphate + H(+). GTP hydrolase that promotes the GTP-dependent binding of aminoacyl-tRNA to the A-site of ribosomes during protein biosynthesis. This Coxiella burnetii (strain Dugway 5J108-111) protein is Elongation factor Tu.